The sequence spans 600 residues: Prostaglandin G/H synthase 1 (600 aa).

A signal peptide spans 1-24; sequence MSRQGISLRFPLLLLLLSPSPVLP. In terms of domain architecture, EGF-like spans 32–70; sequence PVNPCCYYPCQHQGICVRFGLDRYQCDCTRTGYYGPNCT. Intrachain disulfides connect cysteine 36-cysteine 47, cysteine 37-cysteine 159, cysteine 41-cysteine 57, and cysteine 59-cysteine 69. Residues asparagine 68, asparagine 104, and asparagine 144 are each glycosylated (N-linked (GlcNAc...) asparagine). Histidine 207 (proton acceptor) is an active-site residue. Tyrosine 385 serves as the catalytic For cyclooxygenase activity. Histidine 388 is a binding site for heme b. A glycan (N-linked (GlcNAc...) asparagine) is linked at asparagine 410. The cysteines at positions 569 and 575 are disulfide-linked.

It belongs to the prostaglandin G/H synthase family. Homodimer. It depends on heme b as a cofactor.

Its subcellular location is the microsome membrane. The protein localises to the endoplasmic reticulum membrane. It carries out the reaction (5Z,8Z,11Z,14Z)-eicosatetraenoate + AH2 + 2 O2 = prostaglandin H2 + A + H2O. It catalyses the reaction (5Z,8Z,11Z,14Z)-eicosatetraenoate + 2 O2 = prostaglandin G2. The enzyme catalyses prostaglandin G2 + AH2 = prostaglandin H2 + A + H2O. The catalysed reaction is (9Z,12Z)-octadecadienoate + AH2 + O2 = (9R)-hydroxy-(10E,12Z)-octadecadienoate + A + H2O. It carries out the reaction (9Z,12Z)-octadecadienoate + AH2 + O2 = (9S)-hydroxy-(10E,12Z)-octadecadienoate + A + H2O. It catalyses the reaction (9Z,12Z)-octadecadienoate + AH2 + O2 = (13S)-hydroxy-(9Z,11E)-octadecadienoate + A + H2O. The enzyme catalyses (9Z,12Z)-octadecadienoate + AH2 + O2 = (13R)-hydroxy-(9Z,11E)-octadecadienoate + A + H2O. Its pathway is lipid metabolism; prostaglandin biosynthesis. With respect to regulation, the cyclooxygenase activity is inhibited by nonsteroidal anti-inflammatory drugs (NSAIDs) including ibuprofen, flurbiprofen, ketoprofen, naproxen, flurbiprofen, anirolac, fenclofenac and diclofenac. Its function is as follows. Dual cyclooxygenase and peroxidase that plays an important role in the biosynthesis pathway of prostanoids, a class of C20 oxylipins mainly derived from arachidonate ((5Z,8Z,11Z,14Z)-eicosatetraenoate, AA, C20:4(n-6)), with a particular role in the inflammatory response. The cyclooxygenase activity oxygenates AA to the hydroperoxy endoperoxide prostaglandin G2 (PGG2), and the peroxidase activity reduces PGG2 to the hydroxy endoperoxide prostaglandin H2 (PGH2), the precursor of all 2-series prostaglandins and thromboxanes. This complex transformation is initiated by abstraction of hydrogen at carbon 13 (with S-stereochemistry), followed by insertion of molecular O2 to form the endoperoxide bridge between carbon 9 and 11 that defines prostaglandins. The insertion of a second molecule of O2 (bis-oxygenase activity) yields a hydroperoxy group in PGG2 that is then reduced to PGH2 by two electrons. Involved in the constitutive production of prostanoids in particular in the stomach and platelets. In gastric epithelial cells, it is a key step in the generation of prostaglandins, such as prostaglandin E2 (PGE2), which plays an important role in cytoprotection. In platelets, it is involved in the generation of thromboxane A2 (TXA2), which promotes platelet activation and aggregation, vasoconstriction and proliferation of vascular smooth muscle cells. Can also use linoleate (LA, (9Z,12Z)-octadecadienoate, C18:2(n-6)) as substrate and produce hydroxyoctadecadienoates (HODEs) in a regio- and stereospecific manner, being (9R)-HODE ((9R)-hydroxy-(10E,12Z)-octadecadienoate) and (13S)-HODE ((13S)-hydroxy-(9Z,11E)-octadecadienoate) its major products. The protein is Prostaglandin G/H synthase 1 (PTGS1) of Bos taurus (Bovine).